The sequence spans 249 residues: Methyltransferase 1 (249 aa).

The protein belongs to the FkbM methyltransferase family.

The protein operates within secondary metabolite biosynthesis. Its function is as follows. Methyltransferase; part of the pathway that mediates the biosynthesis of tenellin-type 2-pyridones, iron-chelating compounds involved in iron stress tolerance, competition with the natural competitor fungus Metarhizium robertsii and insect hosts infection. Methylates pyridovericin-N-O-(beta-D-glucopyranoside) produced by the UDP-glucosyltransferase GT1 to yield pyridovericin-N-O-(4-O-methyl-beta-D-glucopyranoside) (PMGP). The pathway begins with the assembly of the polyketide-amino acid backbone by the hybrid PKS-NRPS tenS with the help of the enoyl reductase tenC. These enzymes catalyze the synthesis of the pyrrolidine-2-dione intermediates pretellinin A, 11-hydropretellenin A, 12-hydropretellenin A, 13-hydropretellenin A, 14-hydropretellenin A, 12-oxopretellenin A and prototellinin D. The cytochrome P450 monooxygenase tenA then catalyzes an oxidative ring expansion of pretenellin A and 14-hydropretellenin A to form the 2-pyridone core, leading to pretenellin B and pyridovericin, respectively. The cytochrome P450 monooxygenase tenB is then required for the selective N-hydroxylation of the 2-pyridone nitrogen of yield tellinin and 15-hydroxytellenin (15-HT), respectively. The UDP-glucosyltransferase GT1 and the methyltransferase MT1, located outside the tenS gene cluster, contribute to the stepwise glycosylation and methylation of 15-HT to obtain the glycoside pyridovericin-N-O-(4-O-methyl-beta-D-glucopyranoside) (PMGP). Additional related compounds such as 1-O-methyl-15-HT, (8Z)-1-O-methyl-15-HT, and O-methyltenellin A are also produced but the enzymes involved in their biosynthesis have still to be determined. The chain is Methyltransferase 1 from Beauveria bassiana (strain ARSEF 2860) (White muscardine disease fungus).